A 73-amino-acid chain; its full sequence is Large ribosomal subunit protein bL31 (73 aa).

Residues Cys-16, Cys-18, Cys-38, and Cys-41 each coordinate Zn(2+).

It belongs to the bacterial ribosomal protein bL31 family. Type A subfamily. Part of the 50S ribosomal subunit. Zn(2+) is required as a cofactor.

Its function is as follows. Binds the 23S rRNA. In Vibrio vulnificus (strain YJ016), this protein is Large ribosomal subunit protein bL31.